The primary structure comprises 492 residues: Ketol-acid reductoisomerase (NADP(+)) (492 aa).

The 194-residue stretch at 15-208 (AQLGKCRFMA…GAHRAGVLES (194 aa)) folds into the KARI N-terminal Rossmann domain. NADP(+) is bound by residues 45–48 (CGAQ), R68, R76, S78, and 108–110 (DKQ). The active site involves H132. G158 contributes to the NADP(+) binding site. KARI C-terminal knotted domains lie at 209–344 (SFVA…NSPE) and 345–485 (YDGK…MTDM). Positions 217, 221, 389, and 393 each coordinate Mg(2+). Residue S414 coordinates substrate.

It belongs to the ketol-acid reductoisomerase family. Mg(2+) is required as a cofactor.

The catalysed reaction is (2R)-2,3-dihydroxy-3-methylbutanoate + NADP(+) = (2S)-2-acetolactate + NADPH + H(+). It catalyses the reaction (2R,3R)-2,3-dihydroxy-3-methylpentanoate + NADP(+) = (S)-2-ethyl-2-hydroxy-3-oxobutanoate + NADPH + H(+). It participates in amino-acid biosynthesis; L-isoleucine biosynthesis; L-isoleucine from 2-oxobutanoate: step 2/4. It functions in the pathway amino-acid biosynthesis; L-valine biosynthesis; L-valine from pyruvate: step 2/4. Functionally, involved in the biosynthesis of branched-chain amino acids (BCAA). Catalyzes an alkyl-migration followed by a ketol-acid reduction of (S)-2-acetolactate (S2AL) to yield (R)-2,3-dihydroxy-isovalerate. In the isomerase reaction, S2AL is rearranged via a Mg-dependent methyl migration to produce 3-hydroxy-3-methyl-2-ketobutyrate (HMKB). In the reductase reaction, this 2-ketoacid undergoes a metal-dependent reduction by NADPH to yield (R)-2,3-dihydroxy-isovalerate. The sequence is that of Ketol-acid reductoisomerase (NADP(+)) from Photorhabdus laumondii subsp. laumondii (strain DSM 15139 / CIP 105565 / TT01) (Photorhabdus luminescens subsp. laumondii).